Here is a 44-residue protein sequence, read N- to C-terminus: Photosystem I reaction center subunit IX (44 aa).

A helical transmembrane segment spans residues tyrosine 7 to isoleucine 27.

This sequence belongs to the PsaJ family.

It localises to the plastid. The protein resides in the chloroplast thylakoid membrane. May help in the organization of the PsaE and PsaF subunits. In Liriodendron tulipifera (Tuliptree), this protein is Photosystem I reaction center subunit IX.